Consider the following 90-residue polypeptide: MNKTDLIDAIASAAELNKKQAKAALEATLEAISGSLKAGEPVQLIGFGTFKVNSRKARTGRNPQTGAEIKIAASKVPAFVAGKALKDAVK.

It belongs to the bacterial histone-like protein family. In terms of assembly, homodimer.

Functionally, histone-like DNA-binding protein which is capable of wrapping DNA to stabilize it, and thus to prevent its denaturation under extreme environmental conditions. This chain is DNA-binding protein HU (hup), found in Pasteurella multocida (strain Pm70).